The following is a 269-amino-acid chain: Cytolethal distending toxin subunit B homolog (269 aa).

The signal sequence occupies residues 1–22; sequence MKKPVFFLLTMIICSYISFACA.

It localises to the secreted. In terms of biological role, produces a CDT (cytolethal distending toxin) activity, which causes DNA damage in intoxicated cells. This damage induces G2/M cell cycle arrest, chromatin fragmentation, cell distention and nucleus enlargement. This Salmonella typhi protein is Cytolethal distending toxin subunit B homolog (cdtB).